A 268-amino-acid chain; its full sequence is MESSQAYFPPSANKKHVLLTWAQSINGRIGYVVESPSLGQLRLSSKESFVMTHLLRTKFDGIMVGSRTAENDNPSLTAKLPDPANPDCLLPLNKQPIPIIVDSNLRLDYASLKVIRLARERLGKPPLIIVAPSIWQQVQHDSKLKEAVKLIQSVGGRCIIRNEDSPDSWSDYVALDKLLQNGVNRIMVEGGAELLAKAFGSTDIDAYVVTIVPKIFSCSNTTEIKNLNNLNLTTNSHWYPCGPDVIFTNYSDEFYESYKSLLTNSDAI.

NADP(+) is bound by residues Thr-68, Asp-72, 103–106 (SNLR), and 191–195 (GAELL).

The protein belongs to the HTP reductase family. As to quaternary structure, homodimer.

The catalysed reaction is 2,5-diamino-6-(1-D-ribitylamino)pyrimidin-4(3H)-one 5'-phosphate + NADP(+) = 2,5-diamino-6-(1-D-ribosylamino)pyrimidin-4(3H)-one 5'-phosphate + NADPH + H(+). It carries out the reaction 2,5-diamino-6-(1-D-ribitylamino)pyrimidin-4(3H)-one 5'-phosphate + NAD(+) = 2,5-diamino-6-(1-D-ribosylamino)pyrimidin-4(3H)-one 5'-phosphate + NADH + H(+). It participates in cofactor biosynthesis; riboflavin biosynthesis. Its function is as follows. Catalyzes an early step in riboflavin biosynthesis, the NADPH-dependent reduction of the ribose side chain of 2,5-diamino-6-ribosylamino-4(3H)-pyrimidinone 5'-phosphate, yielding 2,5-diamino-6-ribitylamino-4(3H)-pyrimidinone 5'-phosphate. The chain is 2,5-diamino-6-ribosylamino-4(3H)-pyrimidinone 5'-phosphate reductase from Schizosaccharomyces pombe (strain 972 / ATCC 24843) (Fission yeast).